We begin with the raw amino-acid sequence, 390 residues long: Guanine nucleotide exchange factor for Rab-3A (390 aa).

A disordered region spans residues 1-60 (MWSGQPHPDEGHPPPLEAVPVPWKSVGPCKSHRESLGGLPETPAGEEAQGEEGPAATQLD). Residues 40–58 (PETPAGEEAQGEEGPAATQ) show a composition bias toward low complexity. A coiled-coil region spans residues 73-161 (EKGSEFLKEE…AEVTALKTLV (89 aa)). The segment at 166–194 (PASPNRELHPQLLSPTKAGPRKGHLRHKS) is disordered. Residues S168 and S179 each carry the phosphoserine modification. Residues 184–194 (GPRKGHLRHKS) show a composition bias toward basic residues.

It belongs to the SEC2 family. As to quaternary structure, interacts with RAB3A and IHPK1 through the coiled-coil domain. This interaction is competitive. IHPK1 kinase activity is not required for this interaction.

Functionally, guanine nucleotide exchange factor (GEF) which may activate RAB3A, a GTPase that regulates synaptic vesicle exocytosis. Promotes the exchange of GDP to GTP, converting inactive GDP-bound Rab proteins into their active GTP-bound form. May also activate RAB8A and RAB8B. In Bos taurus (Bovine), this protein is Guanine nucleotide exchange factor for Rab-3A (RAB3IL1).